Reading from the N-terminus, the 371-residue chain is tRNA 2-selenouridine synthase (371 aa).

The Rhodanese domain occupies 12 to 135 (FLDDVPMMDM…MRTFLLDTTQ (124 aa)). Residue cysteine 95 is the S-selanylcysteine intermediate of the active site.

It belongs to the SelU family. In terms of assembly, monomer.

It carries out the reaction 5-methylaminomethyl-2-thiouridine(34) in tRNA + selenophosphate + (2E)-geranyl diphosphate + H2O + H(+) = 5-methylaminomethyl-2-selenouridine(34) in tRNA + (2E)-thiogeraniol + phosphate + diphosphate. The enzyme catalyses 5-methylaminomethyl-2-thiouridine(34) in tRNA + (2E)-geranyl diphosphate = 5-methylaminomethyl-S-(2E)-geranyl-thiouridine(34) in tRNA + diphosphate. It catalyses the reaction 5-methylaminomethyl-S-(2E)-geranyl-thiouridine(34) in tRNA + selenophosphate + H(+) = 5-methylaminomethyl-2-(Se-phospho)selenouridine(34) in tRNA + (2E)-thiogeraniol. The catalysed reaction is 5-methylaminomethyl-2-(Se-phospho)selenouridine(34) in tRNA + H2O = 5-methylaminomethyl-2-selenouridine(34) in tRNA + phosphate. Involved in the post-transcriptional modification of the uridine at the wobble position (U34) of tRNA(Lys), tRNA(Glu) and tRNA(Gln). Catalyzes the conversion of 2-thiouridine (S2U-RNA) to 2-selenouridine (Se2U-RNA). Acts in a two-step process involving geranylation of 2-thiouridine (S2U) to S-geranyl-2-thiouridine (geS2U) and subsequent selenation of the latter derivative to 2-selenouridine (Se2U) in the tRNA chain. This Pseudomonas entomophila (strain L48) protein is tRNA 2-selenouridine synthase.